The primary structure comprises 374 residues: Nudix hydrolase 20, chloroplastic (374 aa).

The transit peptide at 1-49 (MASGFCSLALTVTTSLFSSHAITRRVLPILRWRSSSMSLSPLRHSRALS) directs the protein to the chloroplast. In terms of domain architecture, Nudix hydrolase spans 205–346 (GYGVHMNGYV…KANCSLVIID (142 aa)). Residues 244 to 265 (GGLPHGISCGGNLVKECEEEAG) carry the Nudix box motif. Residues Glu-259 and Glu-263 each coordinate Mg(2+).

Belongs to the Nudix hydrolase family. Mg(2+) is required as a cofactor. It depends on Mn(2+) as a cofactor. Expressed in leaves and inflorescences.

The protein resides in the plastid. Its subcellular location is the chloroplast. Probably mediates the hydrolysis of some nucleoside diphosphate derivatives. This is Nudix hydrolase 20, chloroplastic (NUDT20) from Arabidopsis thaliana (Mouse-ear cress).